The primary structure comprises 183 residues: Probable chemoreceptor glutamine deamidase CheD (183 aa).

This sequence belongs to the CheD family.

It catalyses the reaction L-glutaminyl-[protein] + H2O = L-glutamyl-[protein] + NH4(+). Probably deamidates glutamine residues to glutamate on methyl-accepting chemotaxis receptors (MCPs), playing an important role in chemotaxis. The sequence is that of Probable chemoreceptor glutamine deamidase CheD from Rhizobium meliloti (strain 1021) (Ensifer meliloti).